Consider the following 135-residue polypeptide: Small ribosomal subunit protein uS9 (135 aa).

The segment covering 108–118 (VGDPRRTEPHK) has biased composition (basic and acidic residues). The interval 108–135 (VGDPRRTEPHKPNRSTKGPRAKRQKSYR) is disordered. Residues 119–135 (PNRSTKGPRAKRQKSYR) show a composition bias toward basic residues.

This sequence belongs to the universal ribosomal protein uS9 family.

The protein is Small ribosomal subunit protein uS9 (rps9) of Pyrococcus horikoshii (strain ATCC 700860 / DSM 12428 / JCM 9974 / NBRC 100139 / OT-3).